The sequence spans 310 residues: Protein BIG GRAIN 1 (310 aa).

Residues 81–141 are disordered; it reads RAPGPHATTS…KKAKKPGASI (61 aa). The segment covering 90 to 106 has biased composition (low complexity); sequence SSSSECSSYGGFSSSEA.

Belongs to the BIG GRAIN 1 (BG1) plant protein family.

It localises to the cell membrane. Functionally, involved in auxin transport. Positive regulator of the auxin signaling pathway involved in gravitropism, plant growth and grain development. This is Protein BIG GRAIN 1 from Oryza sativa subsp. indica (Rice).